A 389-amino-acid chain; its full sequence is Cytochrome oxidase assembly protein SHY1 (389 aa).

Residues 1–71 lie on the Mitochondrial matrix side of the membrane; sequence MSLLGARSTY…SRRERSFGKK (71 aa). Residues 72 to 92 form a helical membrane-spanning segment; that stretch reads IVLGLMFAMPIISFYLGTWQV. Residues 93-341 lie on the Mitochondrial intermembrane side of the membrane; the sequence is RRLKWKTKLI…KPTIDLKNNH (249 aa). The interval 292–311 is disordered; the sequence is GTQAVDNNTSKPRSRQEMPT. Residues 342–362 traverse the membrane as a helical segment; the sequence is LQYLVTWYGLSFLSTIFLIVA. Topologically, residues 363–389 are mitochondrial matrix; it reads LRKAKRGGVVSQDQLMKEKLKHSRKYM.

Belongs to the SURF1 family. As to quaternary structure, interacts with COA1, COX14 and MSS51.

It is found in the mitochondrion inner membrane. Functionally, required for efficient assembly of cytochrome c oxidase in the mitochondrial inner membrane. Involved in a step that couples MSS51-COX14-dependent regulation of COX1 translation to early steps of cytochrome c oxidase assembly. This chain is Cytochrome oxidase assembly protein SHY1 (SHY1), found in Saccharomyces cerevisiae (strain ATCC 204508 / S288c) (Baker's yeast).